The following is a 351-amino-acid chain: Methionine import ATP-binding protein MetN (351 aa).

Residues 2 to 247 (ITTSGLTKVY…PGSELAAALF (246 aa)) form the ABC transporter domain. 38 to 45 (GQSGAGKS) contacts ATP.

It belongs to the ABC transporter superfamily. Methionine importer (TC 3.A.1.24) family. The complex is composed of two ATP-binding proteins (MetN), two transmembrane proteins (MetI) and a solute-binding protein (MetQ).

Its subcellular location is the cell membrane. The catalysed reaction is L-methionine(out) + ATP + H2O = L-methionine(in) + ADP + phosphate + H(+). It carries out the reaction D-methionine(out) + ATP + H2O = D-methionine(in) + ADP + phosphate + H(+). Its function is as follows. Part of the ABC transporter complex MetNIQ involved in methionine import. Responsible for energy coupling to the transport system. This chain is Methionine import ATP-binding protein MetN, found in Streptomyces coelicolor (strain ATCC BAA-471 / A3(2) / M145).